The sequence spans 230 residues: MSGSGGKGGGRGGLHVRVKTAKRRSVSSTRWLQRQLNDPYVRRAQAEGYRSRAAYKLIELDEKFGLLKKSRAVVDLGIAPGGWSQVVRKANPRARVAGIDLLPCEPIEGVAILEMDFMDDAAPDALIAALGGAPDLVISDMAANTVGHPQTDHLRTIGLAETAADFAVRNLLPGGAFVAKVFAGGADRELLTLLKRHFTTVKHAKPPASRKGSPELYVIAQGFKGRGDAA.

A compositionally biased stretch (gly residues) spans 1-13 (MSGSGGKGGGRGG). The segment at 1–22 (MSGSGGKGGGRGGLHVRVKTAK) is disordered. Gly81, Trp83, Asp100, Asp116, and Asp140 together coordinate S-adenosyl-L-methionine. Lys180 functions as the Proton acceptor in the catalytic mechanism.

It belongs to the class I-like SAM-binding methyltransferase superfamily. RNA methyltransferase RlmE family.

It is found in the cytoplasm. It carries out the reaction uridine(2552) in 23S rRNA + S-adenosyl-L-methionine = 2'-O-methyluridine(2552) in 23S rRNA + S-adenosyl-L-homocysteine + H(+). In terms of biological role, specifically methylates the uridine in position 2552 of 23S rRNA at the 2'-O position of the ribose in the fully assembled 50S ribosomal subunit. This is Ribosomal RNA large subunit methyltransferase E from Sphingopyxis alaskensis (strain DSM 13593 / LMG 18877 / RB2256) (Sphingomonas alaskensis).